A 140-amino-acid chain; its full sequence is MAIERTFSIIKPDATRRNLTGAINAVIEKAGLRIVAQKRIQMTKAQAEAFYAVHSARPFFNDLVSFMTSGPVVVQVLEGEDAVAKYREVMGATNPANAAEGTIRKLFAESIEANSAHGSDSVENAGVEIAQFFSQNEIVG.

Residues Lys11, Phe59, Arg87, Thr93, Arg104, and Asn114 each coordinate ATP. His117 serves as the catalytic Pros-phosphohistidine intermediate.

Belongs to the NDK family. As to quaternary structure, homotetramer. Requires Mg(2+) as cofactor.

Its subcellular location is the cytoplasm. The catalysed reaction is a 2'-deoxyribonucleoside 5'-diphosphate + ATP = a 2'-deoxyribonucleoside 5'-triphosphate + ADP. It carries out the reaction a ribonucleoside 5'-diphosphate + ATP = a ribonucleoside 5'-triphosphate + ADP. Its function is as follows. Major role in the synthesis of nucleoside triphosphates other than ATP. The ATP gamma phosphate is transferred to the NDP beta phosphate via a ping-pong mechanism, using a phosphorylated active-site intermediate. This chain is Nucleoside diphosphate kinase, found in Azorhizobium caulinodans (strain ATCC 43989 / DSM 5975 / JCM 20966 / LMG 6465 / NBRC 14845 / NCIMB 13405 / ORS 571).